A 213-amino-acid chain; its full sequence is Probable thymidylate kinase 2 (213 aa).

10–17 (GIDGSGKS) is an ATP binding site.

Belongs to the thymidylate kinase family.

It carries out the reaction dTMP + ATP = dTDP + ADP. This Saccharolobus solfataricus (strain ATCC 35092 / DSM 1617 / JCM 11322 / P2) (Sulfolobus solfataricus) protein is Probable thymidylate kinase 2 (tmk2).